The primary structure comprises 198 residues: DnaJ homolog subfamily C member 12 (198 aa).

N-acetylmethionine is present on methionine 1. The J domain occupies aspartate 14 to arginine 79. The segment at methionine 112–proline 167 is disordered. Over residues proline 120–glutamate 156 the composition is skewed to basic and acidic residues. Serine 160, serine 166, and serine 182 each carry phosphoserine.

As to quaternary structure, interacts with HSPA8. Interacts with TPH1. Interacts with TPH2.

The protein localises to the cytoplasm. In terms of biological role, probable co-chaperone that participates in the proper folding of biopterin-dependent aromatic amino acid hydroxylases, which include phenylalanine-4-hydroxylase (PAH), tyrosine 3-monooxygenase (TH) and peripheral and neuronal tryptophan hydroxylases (TPH1 and TPH2). This is DnaJ homolog subfamily C member 12 (DNAJC12) from Bos taurus (Bovine).